The following is a 222-amino-acid chain: Triosephosphate isomerase (222 aa).

Substrate is bound at residue asparagine 9–lysine 11. The Electrophile role is filled by histidine 93. Catalysis depends on glutamate 141, which acts as the Proton acceptor. Substrate is bound by residues isoleucine 146, glycine 181, and alanine 202–serine 203.

This sequence belongs to the triosephosphate isomerase family. Homotetramer; dimer of dimers.

Its subcellular location is the cytoplasm. The enzyme catalyses D-glyceraldehyde 3-phosphate = dihydroxyacetone phosphate. It participates in carbohydrate biosynthesis; gluconeogenesis. Its pathway is carbohydrate degradation; glycolysis; D-glyceraldehyde 3-phosphate from glycerone phosphate: step 1/1. Involved in the gluconeogenesis. Catalyzes stereospecifically the conversion of dihydroxyacetone phosphate (DHAP) to D-glyceraldehyde-3-phosphate (G3P). In Methanobrevibacter smithii (strain ATCC 35061 / DSM 861 / OCM 144 / PS), this protein is Triosephosphate isomerase.